We begin with the raw amino-acid sequence, 199 residues long: V-type ATP synthase subunit E (199 aa).

Belongs to the V-ATPase E subunit family.

Its function is as follows. Produces ATP from ADP in the presence of a proton gradient across the membrane. This Borreliella burgdorferi (strain ATCC 35210 / DSM 4680 / CIP 102532 / B31) (Borrelia burgdorferi) protein is V-type ATP synthase subunit E (atpE).